Reading from the N-terminus, the 452-residue chain is Probable ECA polymerase (452 aa).

The next 11 membrane-spanning stretches (helical) occupy residues F6 to F26, V37 to L57, V63 to G83, V118 to L138, G155 to L175, A181 to G201, I207 to W227, M228 to Y248, L341 to I361, Y378 to A398, and V410 to F430.

This sequence belongs to the WzyE family. As to quaternary structure, probably part of a complex composed of WzxE, WzyE and WzzE.

The protein localises to the cell inner membrane. Its pathway is bacterial outer membrane biogenesis; enterobacterial common antigen biosynthesis. In terms of biological role, probably involved in the polymerization of enterobacterial common antigen (ECA) trisaccharide repeat units. The sequence is that of Probable ECA polymerase from Salmonella heidelberg (strain SL476).